We begin with the raw amino-acid sequence, 286 residues long: Nucleotide-binding protein HS_1178 (286 aa).

Residue 8–15 (GRSGAGKS) coordinates ATP. Residue 56–59 (DIRN) coordinates GTP.

The protein belongs to the RapZ-like family.

Its function is as follows. Displays ATPase and GTPase activities. This is Nucleotide-binding protein HS_1178 from Histophilus somni (strain 129Pt) (Haemophilus somnus).